A 653-amino-acid chain; its full sequence is ATP-dependent zinc metalloprotease FtsH 1 (653 aa).

Residues 1–7 are Cytoplasmic-facing; the sequence is MSRFFKS. The helical transmembrane segment at 8–28 threads the bilayer; it reads AAFPILIVVVLAFFAQRLINP. Residues 29-105 lie on the Extracellular side of the membrane; sequence GDSGPRYDYS…FDIEGTKSNG (77 aa). A helical transmembrane segment spans residues 106–126; that stretch reads WLSLLTYVLPFLIFIGFWIFL. Topologically, residues 127-653 are cytoplasmic; it reads MNQVQGGGSK…MHFPERPELA (527 aa). ATP is bound at residue 198–205; the sequence is GPPGTGKT. Zn(2+) is bound at residue His420. The active site involves Glu421. The Zn(2+) site is built by His424 and Asp496. A disordered region spans residues 603-653; the sequence is EEVFGAEASPPPDVPLPPATERGRDTPRPLPRPGLAGGAAEMHFPERPELA. Pro residues predominate over residues 611 to 620; the sequence is SPPPDVPLPP.

It in the central section; belongs to the AAA ATPase family. The protein in the C-terminal section; belongs to the peptidase M41 family. In terms of assembly, homohexamer. The cofactor is Zn(2+).

It localises to the cell membrane. Functionally, acts as a processive, ATP-dependent zinc metallopeptidase for both cytoplasmic and membrane proteins. Plays a role in the quality control of integral membrane proteins. The polypeptide is ATP-dependent zinc metalloprotease FtsH 1 (Conexibacter woesei (strain DSM 14684 / CCUG 47730 / CIP 108061 / JCM 11494 / NBRC 100937 / ID131577)).